Reading from the N-terminus, the 494-residue chain is Histidine--tRNA ligase (494 aa).

The protein belongs to the class-II aminoacyl-tRNA synthetase family. In terms of assembly, homodimer.

Its subcellular location is the cytoplasm. The catalysed reaction is tRNA(His) + L-histidine + ATP = L-histidyl-tRNA(His) + AMP + diphosphate + H(+). The chain is Histidine--tRNA ligase from Cereibacter sphaeroides (strain ATCC 17023 / DSM 158 / JCM 6121 / CCUG 31486 / LMG 2827 / NBRC 12203 / NCIMB 8253 / ATH 2.4.1.) (Rhodobacter sphaeroides).